The following is a 72-amino-acid chain: SPbeta prophage-derived uncharacterized protein YoqN (72 aa).

The protein is SPbeta prophage-derived uncharacterized protein YoqN (yoqN) of Bacillus subtilis (strain 168).